We begin with the raw amino-acid sequence, 270 residues long: Chlorophyll a-b binding protein 7, chloroplastic (270 aa).

The transit peptide at M1 to V42 directs the protein to the chloroplast. Residue W68 coordinates chlorophyll b. Positions 88, 107, and 110 each coordinate chlorophyll a. R112 is a chlorophyll b binding site. Residues W113–L133 form a helical membrane-spanning segment. Q144 is a chlorophyll a binding site. The helical transmembrane segment at Y146–G166 threads the bilayer. The chlorophyll b site is built by I155, E165, and R168. Residues K221, E222, N225, R227, Q239, and H254 each coordinate chlorophyll a. Residues L228 to I248 traverse the membrane as a helical segment.

This sequence belongs to the light-harvesting chlorophyll a/b-binding (LHC) protein family. The LHC complex consists of chlorophyll a-b binding proteins. It depends on Binds at least 14 chlorophylls (8 Chl-a and 6 Chl-b) and carotenoids such as lutein and neoxanthin. as a cofactor. Post-translationally, photoregulated by reversible phosphorylation of its threonine residues.

The protein localises to the plastid. It is found in the chloroplast thylakoid membrane. Its function is as follows. The light-harvesting complex (LHC) functions as a light receptor, it captures and delivers excitation energy to photosystems with which it is closely associated. This chain is Chlorophyll a-b binding protein 7, chloroplastic (CAB7), found in Solanum lycopersicum (Tomato).